The chain runs to 65 residues: Large ribosomal subunit protein bL32 (65 aa).

A compositionally biased stretch (basic residues) spans 1–19 (MAVQKSRKTPSKRGMRRSH). The tract at residues 1 to 32 (MAVQKSRKTPSKRGMRRSHNALVKSTLSEDQE) is disordered.

Belongs to the bacterial ribosomal protein bL32 family.

The polypeptide is Large ribosomal subunit protein bL32 (Vesicomyosocius okutanii subsp. Calyptogena okutanii (strain HA)).